Reading from the N-terminus, the 407-residue chain is Argininosuccinate synthase (407 aa).

ATP-binding positions include alanine 16 to serine 24 and alanine 44. L-citrulline contacts are provided by tyrosine 96 and serine 101. Position 126 (glycine 126) interacts with ATP. L-aspartate-binding residues include threonine 128, asparagine 132, and aspartate 133. Residue asparagine 132 participates in L-citrulline binding. Positions 136, 185, 194, 270, and 282 each coordinate L-citrulline.

Belongs to the argininosuccinate synthase family. Type 1 subfamily. In terms of assembly, homotetramer.

It localises to the cytoplasm. The catalysed reaction is L-citrulline + L-aspartate + ATP = 2-(N(omega)-L-arginino)succinate + AMP + diphosphate + H(+). The protein operates within amino-acid biosynthesis; L-arginine biosynthesis; L-arginine from L-ornithine and carbamoyl phosphate: step 2/3. The chain is Argininosuccinate synthase from Shewanella denitrificans (strain OS217 / ATCC BAA-1090 / DSM 15013).